We begin with the raw amino-acid sequence, 700 residues long: Centrosomal protein of 63 kDa (700 aa).

Methionine 1 is subject to N-acetylmethionine. Coiled coils occupy residues 73–283 and 343–533; these read KEVG…ETFI and LQAE…MCKK. Serine 278, lysine 488, and leucine 492 each carry phosphoserine. Positions 570–603 are disordered; the sequence is QYKTGHHSPRGQTLDSIDPVARGPSPLSSHISPG. Residues 593-603 are compositionally biased toward low complexity; it reads PSPLSSHISPG.

Belongs to the CEP63 family. Interacts with CEP152 and CDK1; these interactions recruit both ligands to centrosomes. Interacts with CDK2, CDK5RAP2, WDR62, CEP90, KIAA0753/moonraker and CCDC14. CEP63, CDK5RAP2, CEP152, WDR62 are proposed to form a stepwise assembled complex at the centrosome forming a ring near parental centrioles. Interacts with CCDC57; the interaction is required for their location to proximal end of centrioles. Interacts with FXR1; promoting its stabilization. In terms of processing, polyubiquitinated via 'Lys-48'-linked ubiquitin, leading to its degradation. Deubiquitinated by USP36, promoting its stabilization.

It localises to the cytoplasm. The protein localises to the cytoskeleton. The protein resides in the microtubule organizing center. Its subcellular location is the centrosome. It is found in the centriole. It localises to the centriolar satellite. Functionally, required for normal spindle assembly. Plays a key role in mother-centriole-dependent centriole duplication; the function also seems to involve CEP152, CDK5RAP2 and WDR62 through a stepwise assembled complex at the centrosome that recruits CDK2 required for centriole duplication. Reported to be required for centrosomal recruitment of CEP152; however, this function has been questioned. Also recruits CDK1 to centrosomes. Plays a role in DNA damage response. Following DNA damage, such as double-strand breaks (DSBs), is removed from centrosomes; this leads to the inactivation of spindle assembly and delay in mitotic progression. Promotes stabilization of FXR1 protein by inhibiting FXR1 ubiquitination. This Mus musculus (Mouse) protein is Centrosomal protein of 63 kDa.